We begin with the raw amino-acid sequence, 517 residues long: Squalene epoxidase 6 (517 aa).

A run of 2 helical transmembrane segments spans residues 3-23 (FTHV…VFYL) and 45-65 (AADV…YALA). FAD contacts are provided by residues 55-56 (VG), 75-76 (ER), Arg83, Phe88, Arg156, Val172, Asp336, and Met349. The chain crosses the membrane as a helical span at residues 447 to 467 (LVYHLCAITLSSIGQLLSPFP).

This sequence belongs to the squalene monooxygenase family. FAD is required as a cofactor. In terms of tissue distribution, expressed in seedlings, leaves, stems, inflorescences and siliques.

The protein localises to the membrane. The enzyme catalyses squalene + reduced [NADPH--hemoprotein reductase] + O2 = (S)-2,3-epoxysqualene + oxidized [NADPH--hemoprotein reductase] + H2O + H(+). It participates in terpene metabolism; lanosterol biosynthesis; lanosterol from farnesyl diphosphate: step 2/3. In terms of biological role, catalyzes the stereospecific oxidation of squalene to (S)-2,3-epoxysqualene, and is considered to be a rate-limiting enzyme in steroid biosynthesis. The protein is Squalene epoxidase 6 (SQE6) of Arabidopsis thaliana (Mouse-ear cress).